A 105-amino-acid chain; its full sequence is Small ribosomal subunit protein uS10 (105 aa).

It belongs to the universal ribosomal protein uS10 family. In terms of assembly, part of the 30S ribosomal subunit.

In terms of biological role, involved in the binding of tRNA to the ribosomes. The chain is Small ribosomal subunit protein uS10 from Rickettsia prowazekii (strain Madrid E).